An 88-amino-acid chain; its full sequence is YcgL domain-containing protein NTHI1684 (88 aa).

Residues 1–85 enclose the YcgL domain; that stretch reads MLCAIYKSKK…QDDGLFNSLS (85 aa).

This is YcgL domain-containing protein NTHI1684 from Haemophilus influenzae (strain 86-028NP).